The sequence spans 254 residues: 5-oxoprolinase subunit A (254 aa).

This sequence belongs to the LamB/PxpA family. Forms a complex composed of PxpA, PxpB and PxpC.

It catalyses the reaction 5-oxo-L-proline + ATP + 2 H2O = L-glutamate + ADP + phosphate + H(+). Its function is as follows. Catalyzes the cleavage of 5-oxoproline to form L-glutamate coupled to the hydrolysis of ATP to ADP and inorganic phosphate. This is 5-oxoprolinase subunit A from Acinetobacter baumannii (strain AB307-0294).